The sequence spans 369 residues: Ubiquitin-conjugating enzyme E2 Q2 (369 aa).

A disordered region spans residues 117–143 (DQPLPTGQNGTTEEVTSEEEEEEEMAE). The segment covering 131–143 (VTSEEEEEEEMAE) has biased composition (acidic residues). The UBC core domain maps to 198–362 (QASDRLMKEL…VQIHEKNGWY (165 aa)). The active-site Glycyl thioester intermediate is Cys-298.

Belongs to the ubiquitin-conjugating enzyme family. Auto-ubiquitinated in vitro. As to expression, detected at embryo implantation sites in the luminal epithelium of pregnant endometrium. Detected at low levels in ovary and liver.

It localises to the cytoplasm. It carries out the reaction S-ubiquitinyl-[E1 ubiquitin-activating enzyme]-L-cysteine + [E2 ubiquitin-conjugating enzyme]-L-cysteine = [E1 ubiquitin-activating enzyme]-L-cysteine + S-ubiquitinyl-[E2 ubiquitin-conjugating enzyme]-L-cysteine.. It functions in the pathway protein modification; protein ubiquitination. Accepts ubiquitin from the E1 complex and catalyzes its covalent attachment to other proteins. In vitro catalyzes 'Lys-48'-linked polyubiquitination. The sequence is that of Ubiquitin-conjugating enzyme E2 Q2 (UBE2Q2) from Oryctolagus cuniculus (Rabbit).